The chain runs to 204 residues: Ribonuclease HII (204 aa).

Residues 1–197 (MILGIDEAGR…KNCILNPKLL (197 aa)) enclose the RNase H type-2 domain. A divalent metal cation contacts are provided by D6, E7, and D103.

It belongs to the RNase HII family. It depends on Mn(2+) as a cofactor. Mg(2+) serves as cofactor.

It localises to the cytoplasm. The enzyme catalyses Endonucleolytic cleavage to 5'-phosphomonoester.. Its function is as follows. Endonuclease that specifically degrades the RNA of RNA-DNA hybrids. The chain is Ribonuclease HII from Helicobacter pylori (strain P12).